The primary structure comprises 101 residues: MDKSKRTFLKSKRSFRKRLPPIQSGDRIDYKNMSLISRFISEQGKILSRRVNRLTLKQQRLITIAIKQARILSLLPFLNNEKQFERTESTTRTPSLRARKR.

This sequence belongs to the bacterial ribosomal protein bS18 family. Part of the 30S ribosomal subunit.

Its subcellular location is the plastid. The protein localises to the chloroplast. The polypeptide is Small ribosomal subunit protein bS18c (Guizotia abyssinica (Niger)).